Consider the following 272-residue polypeptide: Alcohol dehydrogenase-related 31 kDa protein (272 aa).

11–34 (YVADCGGIALETSKVLMTKNIAKL) is a binding site for NAD(+). Residue serine 139 participates in substrate binding. The active-site Proton acceptor is the tyrosine 152.

It belongs to the short-chain dehydrogenases/reductases (SDR) family.

The chain is Alcohol dehydrogenase-related 31 kDa protein (Adhr) from Drosophila melanogaster (Fruit fly).